The following is a 942-amino-acid chain: Lon protease homolog 4, chloroplastic/mitochondrial (942 aa).

S54 carries the post-translational modification Phosphoserine. One can recognise a Lon N-terminal domain in the interval 79-301 (VIALPLPHKP…LTLELVKKEV (223 aa)). Residue 456-463 (GPTGVGKT) coordinates ATP. The interval 673–725 (ISDDVTTDTEETKSLAKTDLESPETSAEGSTVLTDELATGDPTESTTEQSGEV) is disordered. The span at 682–692 (EETKSLAKTDL) shows a compositional bias: basic and acidic residues. Polar residues predominate over residues 695–705 (PETSAEGSTVL). Residues 756 to 940 (QTPVGVVMGL…EQIFELAFGY (185 aa)) form the Lon proteolytic domain. Catalysis depends on residues S846 and K889.

The protein belongs to the peptidase S16 family. Homohexamer or homoheptamer. Organized in a ring with a central cavity.

The protein resides in the mitochondrion matrix. It is found in the plastid. It localises to the chloroplast thylakoid membrane. The enzyme catalyses Hydrolysis of proteins in presence of ATP.. In terms of biological role, ATP-dependent serine protease that mediates the selective degradation of misfolded, unassembled or oxidatively damaged polypeptides as well as certain short-lived regulatory proteins in the mitochondrial matrix. May also have a chaperone function in the assembly of inner membrane protein complexes. Participates in the regulation of mitochondrial gene expression and in the maintenance of the integrity of the mitochondrial genome. Binds to mitochondrial DNA in a site-specific manner. The sequence is that of Lon protease homolog 4, chloroplastic/mitochondrial (LON4) from Arabidopsis thaliana (Mouse-ear cress).